We begin with the raw amino-acid sequence, 202 residues long: uncharacterized protein (202 aa).

In terms of domain architecture, HTH tetR-type spans 14–74 (NAKTERILDV…AMADRYFQRC (61 aa)).

This is an uncharacterized protein from Xanthobacter autotrophicus.